The primary structure comprises 580 residues: 3-(3-hydroxy-phenyl)propionate/3-hydroxycinnamic acid hydroxylase (580 aa).

FAD contacts are provided by residues 14–43 (DVLV…VVEE) and 291–301 (FRRGRLLLAGD).

Belongs to the PheA/TfdB FAD monooxygenase family. FAD serves as cofactor.

The catalysed reaction is 3-(3-hydroxyphenyl)propanoate + NADH + O2 + H(+) = 3-(2,3-dihydroxyphenyl)propanoate + NAD(+) + H2O. It carries out the reaction (2E)-3-(3-hydroxyphenyl)prop-2-enoate + NADH + O2 + H(+) = (2E)-3-(2,3-dihydroxyphenyl)prop-2-enoate + NAD(+) + H2O. Its pathway is aromatic compound metabolism; 3-phenylpropanoate degradation. Catalyzes the insertion of one atom of molecular oxygen into position 2 of the phenyl ring of 3-(3-hydroxyphenyl)propionate (3-HPP) and hydroxycinnamic acid (3HCI). The sequence is that of 3-(3-hydroxy-phenyl)propionate/3-hydroxycinnamic acid hydroxylase from Mycobacterium avium (strain 104).